The chain runs to 513 residues: MEEYEAQLLVVEQALENAADDAQRQDLLALKNNLQELLALTRESGDEAPIDELPQQGDNLDDELQRLKSELNDLEAAGSSQTALDEERQLADLRTKYTAMVGEKCSAPHEHSWGTCYHNALICGVDDEVVMNSEGVLDARLRVLFTNPTHREMLPCSYYLEGECRFDEAKCRFSHGALVTGSSIRKYNPPDFHKLSRSRPVFALLPDRLWHRGRVLCVNFVEQICRVRLDGQDHKERERDFKFEELYPLTTDQDEDDELSSEESNSSMNDNSSDEAESDMDDLEEARRARMVELSLFTFKPTERLGAWEEFTRGIGSKLMEKMGYIHGTGLGSDGRGIVTPVSAQILPQGRSLDACMELREAANGDKDYFSVERKLKRAQRRQRKADEKAYVRESQRVDVFTFLNDSVLGPGESTQQGEQVTKKAKTNELQQHSTKTLNVETVRIADEIRRKQRDMAKVKQSLDRNSGDAQLQKRLQVQMQSHKQELATLQAQERSLSKEQQTRKSKNKMFEF.

A C3H1-type zinc finger spans residues 155-178 (PCSYYLEGECRFDEAKCRFSHGAL). The span at 252–261 (DQDEDDELSS) shows a compositional bias: acidic residues. Residues 252–283 (DQDEDDELSSEESNSSMNDNSSDEAESDMDDL) are disordered. The span at 262–271 (EESNSSMNDN) shows a compositional bias: low complexity. Acidic residues predominate over residues 272-283 (SSDEAESDMDDL). The 47-residue stretch at 312 to 358 (TRGIGSKLMEKMGYIHGTGLGSDGRGIVTPVSAQILPQGRSLDACME) folds into the G-patch domain. The segment covering 478–495 (VQMQSHKQELATLQAQER) has biased composition (polar residues). Residues 478–513 (VQMQSHKQELATLQAQERSLSKEQQTRKSKNKMFEF) form a disordered region. Residues 496–513 (SLSKEQQTRKSKNKMFEF) show a composition bias toward basic and acidic residues.

The protein localises to the nucleus. In terms of biological role, transcription repressor. The chain is Zinc finger CCCH-type with G patch domain-containing protein from Drosophila melanogaster (Fruit fly).